Reading from the N-terminus, the 120-residue chain is NAD(P)H-quinone oxidoreductase subunit 3, chloroplastic (120 aa).

3 helical membrane-spanning segments follow: residues 7–27 (YQTF…ALLI), 64–84 (SFAL…PWAM), and 89–109 (LGIF…IGLV).

The protein belongs to the complex I subunit 3 family. In terms of assembly, NDH is composed of at least 16 different subunits, 5 of which are encoded in the nucleus.

It localises to the plastid. It is found in the chloroplast thylakoid membrane. It catalyses the reaction a plastoquinone + NADH + (n+1) H(+)(in) = a plastoquinol + NAD(+) + n H(+)(out). It carries out the reaction a plastoquinone + NADPH + (n+1) H(+)(in) = a plastoquinol + NADP(+) + n H(+)(out). In terms of biological role, NDH shuttles electrons from NAD(P)H:plastoquinone, via FMN and iron-sulfur (Fe-S) centers, to quinones in the photosynthetic chain and possibly in a chloroplast respiratory chain. The immediate electron acceptor for the enzyme in this species is believed to be plastoquinone. Couples the redox reaction to proton translocation, and thus conserves the redox energy in a proton gradient. The sequence is that of NAD(P)H-quinone oxidoreductase subunit 3, chloroplastic from Psilotum nudum (Whisk fern).